A 66-amino-acid polypeptide reads, in one-letter code: Alpha-conotoxin-like Tx2 (66 aa).

The signal sequence occupies residues 1 to 21 (MGMRMMFTVFLLVVLATTVVS). Positions 22–49 (FTSGRRTFHGRNAAAKASGLVSLTDRRP) are excised as a propeptide. Cystine bridges form between C51–C57 and C52–C65. The interval 53–55 (SHP) is ser-Xaa-Pro motif, crucial for potent interaction with nAChR.

The protein belongs to the conotoxin A superfamily. In terms of tissue distribution, expressed by the venom duct.

It localises to the secreted. In terms of biological role, alpha-conotoxins act on postsynaptic membranes, they bind to the nicotinic acetylcholine receptors (nAChR) and thus inhibit them. This chain is Alpha-conotoxin-like Tx2, found in Conus textile (Cloth-of-gold cone).